The primary structure comprises 396 residues: Tryptophan synthase beta chain (396 aa).

Position 86 is an N6-(pyridoxal phosphate)lysine (Lys86).

Belongs to the TrpB family. As to quaternary structure, tetramer of two alpha and two beta chains. Pyridoxal 5'-phosphate is required as a cofactor.

It carries out the reaction (1S,2R)-1-C-(indol-3-yl)glycerol 3-phosphate + L-serine = D-glyceraldehyde 3-phosphate + L-tryptophan + H2O. The protein operates within amino-acid biosynthesis; L-tryptophan biosynthesis; L-tryptophan from chorismate: step 5/5. Functionally, the beta subunit is responsible for the synthesis of L-tryptophan from indole and L-serine. This Proteus mirabilis (strain HI4320) protein is Tryptophan synthase beta chain.